The sequence spans 257 residues: 1-(5-phosphoribosyl)-5-[(5-phosphoribosylamino)methylideneamino] imidazole-4-carboxamide isomerase (257 aa).

Asp8 acts as the Proton acceptor in catalysis. The Proton donor role is filled by Asp129.

The protein belongs to the HisA/HisF family.

It localises to the cytoplasm. It catalyses the reaction 1-(5-phospho-beta-D-ribosyl)-5-[(5-phospho-beta-D-ribosylamino)methylideneamino]imidazole-4-carboxamide = 5-[(5-phospho-1-deoxy-D-ribulos-1-ylimino)methylamino]-1-(5-phospho-beta-D-ribosyl)imidazole-4-carboxamide. It functions in the pathway amino-acid biosynthesis; L-histidine biosynthesis; L-histidine from 5-phospho-alpha-D-ribose 1-diphosphate: step 4/9. This Thermosynechococcus vestitus (strain NIES-2133 / IAM M-273 / BP-1) protein is 1-(5-phosphoribosyl)-5-[(5-phosphoribosylamino)methylideneamino] imidazole-4-carboxamide isomerase.